A 206-amino-acid polypeptide reads, in one-letter code: MELKVIDAKGQVSGSLSVSDALFAREYNEALVHQLVNAYLANARSGNRAQKTRAEVKHSTKKPWRQKGTGRARSGMTSSPLWRKGGRAFPNKPDENFTQKVNRKMYRAGMATILSQLARDERLFVIEALTAETPKTKVFAEQVKNLALEQVLFVTKRLDENVYLASRNLPNVLVLEAQQVDPYSLLRYKKVIITKDAVAQLEEQWV.

The tract at residues 46–89 is disordered; it reads GNRAQKTRAEVKHSTKKPWRQKGTGRARSGMTSSPLWRKGGRAF. The span at 59–70 shows a compositional bias: basic residues; it reads STKKPWRQKGTG.

It belongs to the universal ribosomal protein uL4 family. In terms of assembly, part of the 50S ribosomal subunit.

Its function is as follows. One of the primary rRNA binding proteins, this protein initially binds near the 5'-end of the 23S rRNA. It is important during the early stages of 50S assembly. It makes multiple contacts with different domains of the 23S rRNA in the assembled 50S subunit and ribosome. In terms of biological role, forms part of the polypeptide exit tunnel. The polypeptide is Large ribosomal subunit protein uL4 (Neisseria gonorrhoeae (strain NCCP11945)).